The primary structure comprises 206 residues: Emopamil-binding protein-like (206 aa).

Transmembrane regions (helical) follow at residues 10-30 (EAGS…ALGL), 42-62 (WVLA…GAFV), 101-121 (LEIL…YAIV), and 165-185 (LWVY…LLLW). In terms of domain architecture, EXPERA spans 39-184 (VERWVLAWLC…LWVLIPGLLL (146 aa)).

The protein belongs to the EBP family. Homodimer.

It is found in the endoplasmic reticulum membrane. Functionally, does not possess sterol isomerase activity and does not bind sigma ligands. The protein is Emopamil-binding protein-like (Ebpl) of Mus musculus (Mouse).